The chain runs to 396 residues: L-lactate dehydrogenase (396 aa).

Positions 1–380 (MIISAASDYR…TQDSLVQVLG (380 aa)) constitute an FMN hydroxy acid dehydrogenase domain. Y24 lines the substrate pocket. The FMN site is built by S106 and Q127. Y129 contributes to the substrate binding site. T155 contacts FMN. R164 is a substrate binding site. K251 lines the FMN pocket. H275 acts as the Proton acceptor in catalysis. Position 278 (R278) interacts with substrate. 306–330 (DSGIRNGLDVVRMIALGADTVLLGR) is a binding site for FMN.

Belongs to the FMN-dependent alpha-hydroxy acid dehydrogenase family. Requires FMN as cofactor.

It is found in the cell inner membrane. The catalysed reaction is (S)-lactate + A = pyruvate + AH2. Its function is as follows. Catalyzes the conversion of L-lactate to pyruvate. Is coupled to the respiratory chain. This Escherichia coli O45:K1 (strain S88 / ExPEC) protein is L-lactate dehydrogenase.